The sequence spans 320 residues: Nucleoporin Nup37 (320 aa).

4 WD repeats span residues 67-113 (KEQR…FTSL), 118-157 (GHGD…ENVI), 160-200 (GLSS…TVIS), and 203-242 (SPKF…VPAD).

It is found in the nucleus. Its subcellular location is the nuclear pore complex. As part of the nuclear pore complex (NPC), has a role in its assembly and function. In terms of biological role, (Microbial infection) Required for optimal replication of E.chaffeensis. This chain is Nucleoporin Nup37, found in Drosophila melanogaster (Fruit fly).